Here is a 221-residue protein sequence, read N- to C-terminus: Endo-1,4-beta-xylanase 2 (221 aa).

An N-terminal signal peptide occupies residues M1–S19. Positions Q32–S221 constitute a GH11 domain. Residues N69 and N92 are each glycosylated (N-linked (GlcNAc...) asparagine). E117 (nucleophile) is an active-site residue. The Proton donor role is filled by E208.

It belongs to the glycosyl hydrolase 11 (cellulase G) family.

It is found in the secreted. The catalysed reaction is Endohydrolysis of (1-&gt;4)-beta-D-xylosidic linkages in xylans.. The protein operates within glycan degradation; xylan degradation. Functionally, endo-1,4-beta-xylanase involved in the hydrolysis of xylan, a major structural heterogeneous polysaccharide found in plant biomass representing the second most abundant polysaccharide in the biosphere, after cellulose. The polypeptide is Endo-1,4-beta-xylanase 2 (Xyn2) (Trichoderma harzianum (Hypocrea lixii)).